The following is a 125-amino-acid chain: MPTINQLLRKKSSRQAPKLKSKKPALAGCPQKRGVCFRVYTRTPKKPNSALRKVAKIRLCNGIVVIASIPGEGHNLQEHSVVCIRGGRVKDLPGVKYKVVRGRLDLQGVVNRKQSRSLYGTPKSK.

The segment at 1–26 (MPTINQLLRKKSSRQAPKLKSKKPAL) is disordered. Residues 8–23 (LRKKSSRQAPKLKSKK) show a composition bias toward basic residues.

The protein belongs to the universal ribosomal protein uS12 family.

It localises to the mitochondrion. This chain is Small ribosomal subunit protein uS12m (RPS12), found in Prototheca wickerhamii.